Consider the following 167-residue polypeptide: Small heat shock protein C1 (167 aa).

The region spanning 59–167 (PLYESNSIKS…EQDAREITIN (109 aa)) is the sHSP domain.

The protein belongs to the small heat shock protein (HSP20) family.

This Rickettsia felis (strain ATCC VR-1525 / URRWXCal2) (Rickettsia azadi) protein is Small heat shock protein C1 (hspC1).